The chain runs to 292 residues: uncharacterized protein (292 aa).

The protein localises to the virion. This is an uncharacterized protein from Acanthamoeba polyphaga (Amoeba).